A 319-amino-acid chain; its full sequence is Acetyl esterase (319 aa).

The Involved in the stabilization of the negatively charged intermediate by the formation of the oxyanion hole motif lies at 91–93 (HGG). Catalysis depends on residues S165, D262, and H292.

It belongs to the 'GDXG' lipolytic enzyme family. Homodimer. Interacts with MalT and MelA.

The protein resides in the cytoplasm. Its function is as follows. Displays esterase activity towards short chain fatty esters (acyl chain length of up to 8 carbons). Able to hydrolyze triacetylglycerol (triacetin) and tributyrylglycerol (tributyrin), but not trioleylglycerol (triolein) or cholesterol oleate. Negatively regulates MalT activity by antagonizing maltotriose binding. Inhibits MelA galactosidase activity. This chain is Acetyl esterase, found in Shigella flexneri serotype 5b (strain 8401).